We begin with the raw amino-acid sequence, 457 residues long: tRNA-2-methylthio-N(6)-dimethylallyladenosine synthase (457 aa).

Residues 3–120 (KKVYVKTFGC…LPQMIDARRA (118 aa)) form the MTTase N-terminal domain. 6 residues coordinate [4Fe-4S] cluster: Cys12, Cys49, Cys83, Cys157, Cys161, and Cys164. The 235-residue stretch at 143–377 (RVEGPSAFVS…QATIEENVAR (235 aa)) folds into the Radical SAM core domain. Residues 380–447 (QSMVGKVERI…PHSLRGELVL (68 aa)) form the TRAM domain.

Belongs to the methylthiotransferase family. MiaB subfamily. In terms of assembly, monomer. Requires [4Fe-4S] cluster as cofactor.

The protein localises to the cytoplasm. The catalysed reaction is N(6)-dimethylallyladenosine(37) in tRNA + (sulfur carrier)-SH + AH2 + 2 S-adenosyl-L-methionine = 2-methylsulfanyl-N(6)-dimethylallyladenosine(37) in tRNA + (sulfur carrier)-H + 5'-deoxyadenosine + L-methionine + A + S-adenosyl-L-homocysteine + 2 H(+). Functionally, catalyzes the methylthiolation of N6-(dimethylallyl)adenosine (i(6)A), leading to the formation of 2-methylthio-N6-(dimethylallyl)adenosine (ms(2)i(6)A) at position 37 in tRNAs that read codons beginning with uridine. This is tRNA-2-methylthio-N(6)-dimethylallyladenosine synthase from Burkholderia cenocepacia (strain HI2424).